The following is a 405-amino-acid chain: Glucose-1-phosphate adenylyltransferase (405 aa).

Residues Y96, G161, 176-177, and S194 each bind alpha-D-glucose 1-phosphate; that span reads EK.

The protein belongs to the bacterial/plant glucose-1-phosphate adenylyltransferase family. In terms of assembly, homotetramer.

It carries out the reaction alpha-D-glucose 1-phosphate + ATP + H(+) = ADP-alpha-D-glucose + diphosphate. It functions in the pathway glycan biosynthesis; glycogen biosynthesis. Its function is as follows. Involved in the biosynthesis of ADP-glucose, a building block required for the elongation reactions to produce glycogen. Catalyzes the reaction between ATP and alpha-D-glucose 1-phosphate (G1P) to produce pyrophosphate and ADP-Glc. In Aliivibrio fischeri (strain MJ11) (Vibrio fischeri), this protein is Glucose-1-phosphate adenylyltransferase.